Consider the following 729-residue polypeptide: Cellulose synthase-like protein E1 (729 aa).

2 helical membrane-spanning segments follow: residues 29 to 49 (VIAY…IWFY) and 64 to 84 (LIWF…VVTQ). Active-site residues include aspartate 152 and aspartate 443. The next 5 membrane-spanning stretches (helical) occupy residues 526-546 (LPVL…IPLF), 553-573 (WFIP…AEFL), 644-664 (MFLV…AAVA), 680-700 (QFVI…GMLL), and 709-729 (MSVT…LAFL).

This sequence belongs to the glycosyltransferase 2 family. Plant cellulose synthase-like E subfamily.

The protein resides in the golgi apparatus membrane. Its function is as follows. Thought to be a Golgi-localized beta-glycan synthase that polymerize the backbones of noncellulosic polysaccharides (hemicelluloses) of plant cell wall. In Arabidopsis thaliana (Mouse-ear cress), this protein is Cellulose synthase-like protein E1 (CSLE1).